Here is a 536-residue protein sequence, read N- to C-terminus: Atrial natriuretic peptide receptor 3 (536 aa).

The N-terminal stretch at 1-26 is a signal peptide; the sequence is MRSLLLFTFSACVLLARVLLAGGASS. Positions 27–40 are excised as a propeptide; that stretch reads GAGDTRPGSRRRAR. The Extracellular segment spans residues 41-478; sequence EALAAQKIEV…KSSGGLEESA (438 aa). N-linked (GlcNAc...) asparagine glycosylation occurs at Asn-81. The chloride site is built by Ser-101, Val-130, and Cys-131. 2 cysteine pairs are disulfide-bonded: Cys-103–Cys-131 and Cys-208–Cys-256. Asn-288 and Asn-389 each carry an N-linked (GlcNAc...) asparagine glycan. A helical transmembrane segment spans residues 479-499; it reads VTGIVVGALLGAGLLMAFYFF. The Cytoplasmic portion of the chain corresponds to 500–536; that stretch reads RKKYRITIERRNQQEESNIGKHRELREDSIRSHFSVA.

It belongs to the ANF receptor family. As to quaternary structure, homodimer; disulfide-linked. Interacts with OSTN.

The protein localises to the cell membrane. Functionally, receptor for the natriuretic peptide hormones, binding with similar affinities atrial natriuretic peptide NPPA/ANP, brain natriuretic peptide NPPB/BNP, and C-type natriuretic peptide NPPC/CNP. May function as a clearance receptor for NPPA, NPPB and NPPC, regulating their local concentrations and effects. Acts as a regulator of osteoblast differentiation and bone growth by binding to its ligand osteocrin, thereby preventing binding between NPR3/NPR-C and natriuretic peptides, leading to increase cGMP production. The sequence is that of Atrial natriuretic peptide receptor 3 (Npr3) from Mus musculus (Mouse).